Here is a 260-residue protein sequence, read N- to C-terminus: Hydroxyethylthiazole kinase (260 aa).

ATP-binding residues include Arg-126 and Ser-172. Residue Gly-199 coordinates substrate.

The protein belongs to the Thz kinase family. Mg(2+) is required as a cofactor.

The enzyme catalyses 5-(2-hydroxyethyl)-4-methylthiazole + ATP = 4-methyl-5-(2-phosphooxyethyl)-thiazole + ADP + H(+). The protein operates within cofactor biosynthesis; thiamine diphosphate biosynthesis; 4-methyl-5-(2-phosphoethyl)-thiazole from 5-(2-hydroxyethyl)-4-methylthiazole: step 1/1. Its function is as follows. Catalyzes the phosphorylation of the hydroxyl group of 4-methyl-5-beta-hydroxyethylthiazole (THZ). This chain is Hydroxyethylthiazole kinase, found in Burkholderia thailandensis (strain ATCC 700388 / DSM 13276 / CCUG 48851 / CIP 106301 / E264).